Reading from the N-terminus, the 186-residue chain is ATP synthase subunit delta (186 aa).

This sequence belongs to the ATPase delta chain family. F-type ATPases have 2 components, F(1) - the catalytic core - and F(0) - the membrane proton channel. F(1) has five subunits: alpha(3), beta(3), gamma(1), delta(1), epsilon(1). F(0) has three main subunits: a(1), b(2) and c(10-14). The alpha and beta chains form an alternating ring which encloses part of the gamma chain. F(1) is attached to F(0) by a central stalk formed by the gamma and epsilon chains, while a peripheral stalk is formed by the delta and b chains.

It localises to the cell inner membrane. F(1)F(0) ATP synthase produces ATP from ADP in the presence of a proton or sodium gradient. F-type ATPases consist of two structural domains, F(1) containing the extramembraneous catalytic core and F(0) containing the membrane proton channel, linked together by a central stalk and a peripheral stalk. During catalysis, ATP synthesis in the catalytic domain of F(1) is coupled via a rotary mechanism of the central stalk subunits to proton translocation. Its function is as follows. This protein is part of the stalk that links CF(0) to CF(1). It either transmits conformational changes from CF(0) to CF(1) or is implicated in proton conduction. In Brucella abortus (strain S19), this protein is ATP synthase subunit delta.